Here is a 104-residue protein sequence, read N- to C-terminus: uncharacterized protein (104 aa).

It localises to the mitochondrion. This is an uncharacterized protein from Claviceps purpurea (Ergot fungus).